We begin with the raw amino-acid sequence, 743 residues long: Dystrobrevin alpha (743 aa).

Residues 1–288 (MIEDSGKRGN…SHSNQHQMKE (288 aa)) form an interaction with MAGEE1 region. Residues 238–294 (FHPVECSYCHSESMMGFRYRCQQCHNYQLCQDCFWRGHAGGSHSNQHQMKEYTSWKS) form a ZZ-type zinc finger. Zn(2+) is bound by residues Cys-243, Cys-246, Cys-258, Cys-261, Cys-267, Cys-270, His-280, and His-284. Residues 400–450 (DRLADEHVLIGLYVNMLRNNPSCMLESSNRLDEEHRLIARYAARLAAESSS) form a syntrophin-binding region region. The stretch at 461 to 556 (DISFTIDANK…EGLMKLLKTQ (96 aa)) forms a coiled coil. Residues 556–575 (QGAGSPRSSPSHTISRPIPM) form a disordered region. Over residues 557–569 (GAGSPRSSPSHTI) the composition is skewed to polar residues. Ser-662 is modified (phosphoserine).

It belongs to the dystrophin family. Dystrobrevin subfamily. As to quaternary structure, interacts with dystrophin, utrophin and the syntrophins SNTA1, SNTB1, SNTB2, SNTG1 and SNTG2. Interacts with MAGEE1. Binds dystrobrevin binding protein 1. Interacts with CTNNAL1. The interaction is required for correct localization of both CTNNAL1 and DTNA. Does not interact with dystrophin. In terms of processing, phosphorylation of DTN-1 on tyrosine kinase substrate domain present in the C-terminus. Highly expressed in brain, skeletal and cardiac muscles, and expressed at lower levels in lung, liver and pancreas. Isoform 2 is not expressed in cardiac muscle. Isoform 7 and isoform 8 are only expressed in muscle.

It is found in the cytoplasm. It localises to the synapse. The protein localises to the cell membrane. May be involved in the formation and stability of synapses as well as being involved in the clustering of nicotinic acetylcholine receptors. This chain is Dystrobrevin alpha, found in Homo sapiens (Human).